The following is a 333-amino-acid chain: MLTLTRIHTVSYEVRSTFLFISVLEFAVGFLTNAFVFLVNFWDVVKRQPLSNSDCVLLCLSISRLFLHGLLFLSAIQLTHFQKLSEPLNHSYQAIIMLWMIANQANLWLAACLSLLYCSKLIRFSHTFLICLASWVSRKISQMLLGIILCSCICTVLCVWCFFSRPHFTVTTVLFMNNNTRLNWQIKDLNLFYSFLFCYLWSVPPFLLFLVSSGMLTVSLGRHMRTMKVYTRDSRDPSLEAHIKALKSLVSFFCFFVISSCAAFISVPLLILWRDKIGVMVCVGIMAACPSGHAAVLISGNAKLRRAVTTILLWAQSSLKVRADHKADSRTLC.

The Extracellular segment spans residues 1–17 (MLTLTRIHTVSYEVRST). A helical membrane pass occupies residues 18-38 (FLFISVLEFAVGFLTNAFVFL). Over 39–55 (VNFWDVVKRQPLSNSDC) the chain is Cytoplasmic. A helical membrane pass occupies residues 56-76 (VLLCLSISRLFLHGLLFLSAI). Residues 77–94 (QLTHFQKLSEPLNHSYQA) are Extracellular-facing. Residues 95 to 115 (IIMLWMIANQANLWLAACLSL) form a helical membrane-spanning segment. Residues 116-142 (LYCSKLIRFSHTFLICLASWVSRKISQ) are Cytoplasmic-facing. The helical transmembrane segment at 143-163 (MLLGIILCSCICTVLCVWCFF) threads the bilayer. Residues 164 to 190 (SRPHFTVTTVLFMNNNTRLNWQIKDLN) lie on the Extracellular side of the membrane. An N-linked (GlcNAc...) asparagine glycan is attached at Asn-178. A helical transmembrane segment spans residues 191-211 (LFYSFLFCYLWSVPPFLLFLV). The Cytoplasmic segment spans residues 212-251 (SSGMLTVSLGRHMRTMKVYTRDSRDPSLEAHIKALKSLVS). Residues 252–272 (FFCFFVISSCAAFISVPLLIL) traverse the membrane as a helical segment. Topologically, residues 273–276 (WRDK) are extracellular. The chain crosses the membrane as a helical span at residues 277 to 297 (IGVMVCVGIMAACPSGHAAVL). Residues 298-333 (ISGNAKLRRAVTTILLWAQSSLKVRADHKADSRTLC) lie on the Cytoplasmic side of the membrane.

This sequence belongs to the G-protein coupled receptor T2R family.

Its subcellular location is the membrane. Its function is as follows. Receptor that may play a role in the perception of bitterness and is gustducin-linked. May play a role in sensing the chemical composition of the gastrointestinal content. The activity of this receptor may stimulate alpha gustducin, mediate PLC-beta-2 activation and lead to the gating of TRPM5. The polypeptide is Taste receptor type 2 member 38 (TAS2R38) (Pan troglodytes (Chimpanzee)).